The following is a 173-amino-acid chain: Alpha-crystallin A chain (173 aa).

The residue at position 1 (Met-1) is an N-acetylmethionine. The tract at residues 1 to 63 is required for complex formation with BFSP1 and BFSP2; sequence MDVTIQHPWF…RTVLDSGISE (63 aa). Gln-6 carries the post-translational modification Deamidated glutamine; partial. The residue at position 45 (Ser-45) is a Phosphoserine. Gln-50 is subject to Deamidated glutamine; partial. Residues 52-162 form the sHSP domain; sequence LFRTVLDSGI…GHSERAIPVS (111 aa). Lys-70 is subject to N6-acetyllysine. Deamidated glutamine; partial is present on Gln-90. An N6-acetyllysine modification is found at Lys-99. His-100 provides a ligand contact to Zn(2+). Asn-101 is modified (deamidated asparagine; partial). Residues Glu-102 and His-107 each coordinate Zn(2+). Ser-122 bears the Phosphoserine mark. Asn-123 is modified (deamidated asparagine; partial). Residues 145 to 173 form a disordered region; sequence KVQSGLDAGHSERAIPVSREEKPSSAPSS. Gln-147 is subject to Deamidated glutamine; partial. Residues 153–167 are compositionally biased toward basic and acidic residues; sequence GHSERAIPVSREEKP. His-154 lines the Zn(2+) pocket. The O-linked (GlcNAc) serine glycan is linked to Ser-162.

The protein belongs to the small heat shock protein (HSP20) family. As to quaternary structure, heteromer composed of three CRYAA and one CRYAB subunits. Inter-subunit bridging via zinc ions enhances stability, which is crucial as there is no protein turn over in the lens. Can also form homodimers and homotetramers (dimers of dimers) which serve as the building blocks of homooligomers. Within homooligomers, the zinc-binding motif is created from residues of 3 different molecules. His-100 and Glu-102 from one molecule are ligands of the zinc ion, and His-107 and His-154 residues from additional molecules complete the site with tetrahedral coordination geometry. Part of a complex required for lens intermediate filament formation composed of BFSP1, BFSP2 and CRYAA. Post-translationally, acetylation at Lys-70 may increase chaperone activity. In terms of processing, undergoes age-dependent proteolytical cleavage at the C-terminus.

The protein resides in the cytoplasm. The protein localises to the nucleus. In terms of biological role, contributes to the transparency and refractive index of the lens. Acts as a chaperone, preventing aggregation of various proteins under a wide range of stress conditions. Required for the correct formation of lens intermediate filaments as part of a complex composed of BFSP1, BFSP2 and CRYAA. This is Alpha-crystallin A chain (CRYAA) from Oryctolagus cuniculus (Rabbit).